A 193-amino-acid chain; its full sequence is dCTP deaminase (193 aa).

Residues 110–115 (RSSLAR), Asp-128, 136–138 (VLE), Tyr-171, Lys-178, and Gln-182 each bind dCTP. The active-site Proton donor/acceptor is Glu-138. The segment at 174-193 (RKSAKYKDQQEAVASRISQD) is disordered.

This sequence belongs to the dCTP deaminase family. Homotrimer.

The enzyme catalyses dCTP + H2O + H(+) = dUTP + NH4(+). The protein operates within pyrimidine metabolism; dUMP biosynthesis; dUMP from dCTP (dUTP route): step 1/2. In terms of biological role, catalyzes the deamination of dCTP to dUTP. In Shewanella baltica (strain OS223), this protein is dCTP deaminase.